A 169-amino-acid polypeptide reads, in one-letter code: MSASEEMLGGARGESTTATGPFSFSSEPTLEDIRRLHAEFAAERDWEQFHQPRNLLLALVGEVGELAELFQWKPDEEPGPQAWSPRERAALQEELSDILIYLVALAARCRVDLPQAVLCKMDTNRRRYPVHLSRGSACKYTDLPHGATSENQAMGPADPASESTGQVST.

The segment at 1 to 26 is disordered; it reads MSASEEMLGGARGESTTATGPFSFSS. The segment covering 14-26 has biased composition (polar residues); it reads ESTTATGPFSFSS. Substrate is bound by residues H37 and 46–50; that span reads WEQFH. Mg(2+) is bound by residues E62 and E65. W72 contributes to the substrate binding site. S84 carries the phosphoserine modification. Mg(2+) is bound by residues E94 and D97. Y101 serves as a coordination point for substrate. The segment at 143 to 169 is disordered; sequence LPHGATSENQAMGPADPASESTGQVST.

As to quaternary structure, homotetramer. It depends on Mg(2+) as a cofactor.

The protein localises to the cytoplasm. The protein resides in the cytosol. The enzyme catalyses dCTP + H2O = dCMP + diphosphate + H(+). Hydrolyzes deoxynucleoside triphosphates (dNTPs) to the corresponding nucleoside monophosphates. Has a strong preference for dCTP and its analogs including 5-iodo-dCTP and 5-methyl-dCTP for which it may even have a higher efficiency. May protect DNA or RNA against the incorporation of these genotoxic nucleotide analogs through their catabolism. The polypeptide is dCTP pyrophosphatase 1 (Bos taurus (Bovine)).